We begin with the raw amino-acid sequence, 318 residues long: D-alanine--D-alanine ligase B (318 aa).

The region spanning 117–315 (KQVWLSLGLS…FEALVWRVLE (199 aa)) is the ATP-grasp domain. 146–201 (AEQIGLPVIVKPANEGSSVGVSRVFDQAQLDEAVTLAARYDGALLMEQLIEGDELT) lines the ATP pocket. The Mg(2+) site is built by Asp-268, Glu-282, and Asn-284.

Belongs to the D-alanine--D-alanine ligase family. Mg(2+) serves as cofactor. It depends on Mn(2+) as a cofactor.

Its subcellular location is the cytoplasm. The catalysed reaction is 2 D-alanine + ATP = D-alanyl-D-alanine + ADP + phosphate + H(+). The protein operates within cell wall biogenesis; peptidoglycan biosynthesis. In terms of biological role, cell wall formation. This Xanthomonas campestris pv. campestris (strain ATCC 33913 / DSM 3586 / NCPPB 528 / LMG 568 / P 25) protein is D-alanine--D-alanine ligase B.